The following is a 113-amino-acid chain: N-alpha-acetyltransferase 38, NatC auxiliary subunit (113 aa).

Residues methionine 1 to alanine 29 form a disordered region. One can recognise a Sm domain in the interval threonine 28–serine 106.

This sequence belongs to the snRNP Sm proteins family. As to quaternary structure, component of the N-terminal acetyltransferase C (NatC) complex.

The protein resides in the cytoplasm. It localises to the nucleus. Auxillary component of the N-terminal acetyltransferase C (NatC) complex which catalyzes acetylation of N-terminal methionine residues. N-terminal acetylation protects proteins from ubiquitination and degradation by the N-end rule pathway. The protein is N-alpha-acetyltransferase 38, NatC auxiliary subunit (naa38) of Xenopus tropicalis (Western clawed frog).